Consider the following 373-residue polypeptide: D-amino-acid transaminase, chloroplastic (373 aa).

A chloroplast-targeting transit peptide spans 1 to 57 (MAGLSLEFTVNTWNLRSLSQVPCPLRHGFRFPRRLTRRRTILMCSDSSSQSWNVPVL). Arg128 provides a ligand contact to pyridoxal 5'-phosphate. Lys222 acts as the Proton acceptor in catalysis. At Lys222 the chain carries N6-(pyridoxal phosphate)lysine. Pyridoxal 5'-phosphate is bound at residue Glu255.

It belongs to the class-IV pyridoxal-phosphate-dependent aminotransferase family. Homodimer. Pyridoxal 5'-phosphate serves as cofactor.

Its subcellular location is the plastid. The protein localises to the chloroplast. The enzyme catalyses D-alanine + 2-oxoglutarate = D-glutamate + pyruvate. It carries out the reaction 4-amino-4-deoxychorismate = 4-aminobenzoate + pyruvate + H(+). It participates in cofactor biosynthesis; tetrahydrofolate biosynthesis; 4-aminobenzoate from chorismate: step 2/2. With respect to regulation, inhibited by hydroxylamine or amino-oxyacetic acid. Functionally, amino acid aminotransferase showing activity for D-Asp and D-Ala as amino donors with 2-oxoglutarate as an amino acceptor. Can also use D-Met, D-Tyr, D-Phe, D-Gln, D-Trp and D-Asn as substrates, but no activity with L-Asp, L-Ala, L-Leu, L-Ile or L-Val. Also catalyzes the reverse reaction where an amino group is transferred from D-Glu to pyruvate or oxaloacetate to produce D-Ala or D-Asp, respectively. Also involved in folate biosynthesis, acting as an aminodeoxychorismate lyase converting 4-amino-4-deoxychorismate (ADC) to p-aminobenzoate (PABA). The chain is D-amino-acid transaminase, chloroplastic from Arabidopsis thaliana (Mouse-ear cress).